A 318-amino-acid chain; its full sequence is Olfactory receptor 10H1 (318 aa).

Residues 1-25 (MQRANHSTVTQFILVGFSVFPHLQL) lie on the Extracellular side of the membrane. Asparagine 5 carries N-linked (GlcNAc...) asparagine glycosylation. Residues 26–46 (MLFLLFLLMYLFTLLGNLLIM) traverse the membrane as a helical segment. Topologically, residues 47–54 (ATVWSERS) are cytoplasmic. The helical transmembrane segment at 55–75 (LHTPMYLFLCALSVSEILYTV) threads the bilayer. Topologically, residues 76 to 99 (AIIPRMLADLLSTQRSIAFLACAS) are extracellular. Cysteine 97 and cysteine 189 are oxidised to a cystine. The chain crosses the membrane as a helical span at residues 100-120 (QMFFSFSFGFTHSFLLTVMGY). Over 121-139 (DRYVAICHPLRYNVLMSPR) the chain is Cytoplasmic. A helical membrane pass occupies residues 140–160 (GCACLVGCSWAGGLVMGMVVT). Residues 161-197 (SAIFHLAFCGHKEIHHFACHVPPLLKLACGDDVLVVA) are Extracellular-facing. The helical transmembrane segment at 198-218 (KGVGLVCITALLGCFLLILLS) threads the bilayer. Residues 219–238 (YAFIVAAILKIPSAEGRNKA) are Cytoplasmic-facing. Residues 239–259 (FSTCASHLTVVVVHYGFASVI) form a helical membrane-spanning segment. The Extracellular portion of the chain corresponds to 260–272 (YLKPKSPQSLEGD). Residues 273–293 (TLMGITYTVLTPFLSPIIFSL) traverse the membrane as a helical segment. Residues 294-318 (RNKELKVAMKKTFFSKLYPEKNVMM) lie on the Cytoplasmic side of the membrane.

It belongs to the G-protein coupled receptor 1 family.

It is found in the cell membrane. Functionally, odorant receptor. In Homo sapiens (Human), this protein is Olfactory receptor 10H1 (OR10H1).